The following is a 128-amino-acid chain: uncharacterized protein (128 aa).

The span at 1–28 shows a compositional bias: basic and acidic residues; sequence MDADDFGKKDLENGNESPKKPIFMKDWK. Residues 1-30 are disordered; sequence MDADDFGKKDLENGNESPKKPIFMKDWKNS.

The protein resides in the cytoplasm. Its subcellular location is the nucleus. This is an uncharacterized protein from Schizosaccharomyces pombe (strain 972 / ATCC 24843) (Fission yeast).